The chain runs to 394 residues: NAD(P)H-quinone oxidoreductase subunit H (394 aa).

This sequence belongs to the complex I 49 kDa subunit family. As to quaternary structure, NDH-1 can be composed of about 15 different subunits; different subcomplexes with different compositions have been identified which probably have different functions.

It localises to the cellular thylakoid membrane. It carries out the reaction a plastoquinone + NADH + (n+1) H(+)(in) = a plastoquinol + NAD(+) + n H(+)(out). The catalysed reaction is a plastoquinone + NADPH + (n+1) H(+)(in) = a plastoquinol + NADP(+) + n H(+)(out). In terms of biological role, NDH-1 shuttles electrons from an unknown electron donor, via FMN and iron-sulfur (Fe-S) centers, to quinones in the respiratory and/or the photosynthetic chain. The immediate electron acceptor for the enzyme in this species is believed to be plastoquinone. Couples the redox reaction to proton translocation, and thus conserves the redox energy in a proton gradient. Cyanobacterial NDH-1 also plays a role in inorganic carbon-concentration. This chain is NAD(P)H-quinone oxidoreductase subunit H, found in Synechococcus sp. (strain WH7803).